Here is a 172-residue protein sequence, read N- to C-terminus: Centrin-1 (172 aa).

Positions 1–31 (MASGFKKPSAASTGQKRKVAPKPELTEDQKQ) are disordered. 4 consecutive EF-hand domains span residues 28-63 (DQKQ…LGFE), 64-99 (PRKE…KMSE), 101-136 (DTKE…LGEN), and 137-172 (LTDE…TSLY). Positions 41, 43, 45, 47, and 52 each coordinate Ca(2+). The Ca(2+) site is built by Asp-150, Asp-152, Asp-154, Glu-156, and Glu-161.

It belongs to the centrin family. Monomer. Interacts with CIMAP3. Interacts with USP49.

It is found in the cytoplasm. Its subcellular location is the cytoskeleton. The protein resides in the microtubule organizing center. The protein localises to the centrosome. It localises to the cell projection. It is found in the cilium. In terms of biological role, plays a fundamental role in microtubule-organizing center structure and function. Plays a role in sperm cilia formation. The sequence is that of Centrin-1 from Homo sapiens (Human).